A 188-amino-acid polypeptide reads, in one-letter code: MTKFLGPIAGFGVTFSTMFKKANTEFYPEEKTPTAPRYHGRHQLNRYADGLEKCIGCELCAWACPADAIFVEGADNTDEERYSPGERYGRVYQINYLRCIGCGLCIEACPTRALTMTNEYEMADDNRAGLIYEKDRLLAPLESGMVDSPHPMAPGTTAEDYYRGTVTGGAAPASQDEPEADDTAGDRP.

2 consecutive 4Fe-4S ferredoxin-type domains span residues 44 to 74 (LNRY…VEGA) and 90 to 119 (RVYQ…MTNE). The [4Fe-4S] cluster site is built by C54, C57, C60, C64, C99, C102, C105, and C109. Residues 144–188 (GMVDSPHPMAPGTTAEDYYRGTVTGGAAPASQDEPEADDTAGDRP) form a disordered region. The segment covering 176–188 (DEPEADDTAGDRP) has biased composition (acidic residues).

Belongs to the complex I 23 kDa subunit family. NDH-1 is composed of 14 different subunits. Subunits NuoA, H, J, K, L, M, N constitute the membrane sector of the complex. [4Fe-4S] cluster is required as a cofactor.

Its subcellular location is the cell membrane. It catalyses the reaction a quinone + NADH + 5 H(+)(in) = a quinol + NAD(+) + 4 H(+)(out). Functionally, NDH-1 shuttles electrons from NADH, via FMN and iron-sulfur (Fe-S) centers, to quinones in the respiratory chain. The immediate electron acceptor for the enzyme in this species is believed to be ubiquinone. Couples the redox reaction to proton translocation (for every two electrons transferred, four hydrogen ions are translocated across the cytoplasmic membrane), and thus conserves the redox energy in a proton gradient. The chain is NADH-quinone oxidoreductase subunit I from Rhodococcus opacus (strain B4).